The primary structure comprises 367 residues: Peptide chain release factor 2 (367 aa).

At glutamine 254 the chain carries N5-methylglutamine.

It belongs to the prokaryotic/mitochondrial release factor family. In terms of processing, methylated by PrmC. Methylation increases the termination efficiency of RF2.

The protein resides in the cytoplasm. Functionally, peptide chain release factor 2 directs the termination of translation in response to the peptide chain termination codons UGA and UAA. This Neisseria meningitidis serogroup B (strain ATCC BAA-335 / MC58) protein is Peptide chain release factor 2.